A 506-amino-acid chain; its full sequence is AMP phosphorylase (506 aa).

Residues G167, S193–G198, and T202 contribute to the AMP site. D255 (proton donor) is an active-site residue. S263 and K287 together coordinate AMP.

This sequence belongs to the thymidine/pyrimidine-nucleoside phosphorylase family. Type 2 subfamily.

It carries out the reaction AMP + phosphate = alpha-D-ribose 1,5-bisphosphate + adenine. The enzyme catalyses CMP + phosphate = cytosine + alpha-D-ribose 1,5-bisphosphate. It catalyses the reaction UMP + phosphate = alpha-D-ribose 1,5-bisphosphate + uracil. Functionally, catalyzes the conversion of AMP and phosphate to adenine and ribose 1,5-bisphosphate (R15P). Exhibits phosphorylase activity toward CMP and UMP in addition to AMP. Functions in an archaeal AMP degradation pathway, together with R15P isomerase and RubisCO. This Methanosarcina barkeri (strain Fusaro / DSM 804) protein is AMP phosphorylase.